Reading from the N-terminus, the 252-residue chain is Fructose-1,6-bisphosphatase/inositol-1-monophosphatase (252 aa).

6 residues coordinate Mg(2+): Asp38, Thr40, Glu67, Asp82, Leu84, and Asp85. Substrate is bound by residues 85–87 (DGT), Arg167, Ala172, and Arg191. Asp200 is a Mg(2+) binding site.

This sequence belongs to the inositol monophosphatase superfamily. FBPase class 4 family. Homodimer. Requires Mg(2+) as cofactor. Mn(2+) serves as cofactor.

The enzyme catalyses beta-D-fructose 1,6-bisphosphate + H2O = beta-D-fructose 6-phosphate + phosphate. It carries out the reaction a myo-inositol phosphate + H2O = myo-inositol + phosphate. With respect to regulation, both FBPase and IMPase activities are inhibited by Ca(2+). In contrast to mammalian I-1-P phosphatases, is only very weakly inhibited by Li(+) (with an IC(50) of about 290 mM). In terms of biological role, phosphatase with broad specificity; it can dephosphorylate fructose 1,6-bisphosphate, both D and L isomers of inositol-1-phosphate (I-1-P), 2'-AMP, pNPP, inositol-2-phosphate, beta-glycerol phosphate, and alpha-D-glucose-1-phosphate. Cannot hydrolyze glucose-6-phosphate and fructose-6-phosphate. May be involved in the biosynthesis of a unique osmolyte, di-myo-inositol 1,1-phosphate. This chain is Fructose-1,6-bisphosphatase/inositol-1-monophosphatase (suhB), found in Archaeoglobus fulgidus (strain ATCC 49558 / DSM 4304 / JCM 9628 / NBRC 100126 / VC-16).